The chain runs to 142 residues: Large ribosomal subunit protein uL16 (142 aa).

This sequence belongs to the universal ribosomal protein uL16 family. As to quaternary structure, part of the 50S ribosomal subunit.

Binds 23S rRNA and is also seen to make contacts with the A and possibly P site tRNAs. This is Large ribosomal subunit protein uL16 from Thermotoga sp. (strain RQ2).